The primary structure comprises 123 residues: Small ribosomal subunit protein uS12cz/uS12cy (123 aa).

This sequence belongs to the universal ribosomal protein uS12 family. In terms of assembly, part of the 30S ribosomal subunit.

The protein localises to the plastid. Its subcellular location is the chloroplast. In terms of biological role, with S4 and S5 plays an important role in translational accuracy. Located at the interface of the 30S and 50S subunits. The chain is Small ribosomal subunit protein uS12cz/uS12cy (rps12-A) from Cucumis sativus (Cucumber).